The primary structure comprises 241 residues: 7-cyano-7-deazaguanine synthase (241 aa).

15–25 (FSGGQDSTTTL) contacts ATP. Positions 203, 218, 221, and 224 each coordinate Zn(2+).

It belongs to the QueC family. The cofactor is Zn(2+).

The enzyme catalyses 7-carboxy-7-deazaguanine + NH4(+) + ATP = 7-cyano-7-deazaguanine + ADP + phosphate + H2O + H(+). The protein operates within purine metabolism; 7-cyano-7-deazaguanine biosynthesis. Its function is as follows. Catalyzes the ATP-dependent conversion of 7-carboxy-7-deazaguanine (CDG) to 7-cyano-7-deazaguanine (preQ(0)). The sequence is that of 7-cyano-7-deazaguanine synthase from Azorhizobium caulinodans (strain ATCC 43989 / DSM 5975 / JCM 20966 / LMG 6465 / NBRC 14845 / NCIMB 13405 / ORS 571).